The following is a 500-amino-acid chain: Lysine--tRNA ligase (500 aa).

Residues Glu402 and Glu409 each contribute to the Mg(2+) site.

Belongs to the class-II aminoacyl-tRNA synthetase family. In terms of assembly, homodimer. Requires Mg(2+) as cofactor.

Its subcellular location is the cytoplasm. It carries out the reaction tRNA(Lys) + L-lysine + ATP = L-lysyl-tRNA(Lys) + AMP + diphosphate. This chain is Lysine--tRNA ligase, found in Buchnera aphidicola subsp. Baizongia pistaciae (strain Bp).